A 180-amino-acid polypeptide reads, in one-letter code: NADH-quinone oxidoreductase subunit I (180 aa).

2 4Fe-4S ferredoxin-type domains span residues 48 to 80 (IVLTRDPDGAERCVACNLCAVACPVGCISLQKA) and 90 to 119 (EFFRINFSRCIFCGMCEEACPTTALQLTPD). Residues C60, C63, C66, C70, C99, C102, C105, and C109 each coordinate [4Fe-4S] cluster.

It belongs to the complex I 23 kDa subunit family. As to quaternary structure, NDH-1 is composed of 13 different subunits. Subunits NuoA, H, J, K, L, M, N constitute the membrane sector of the complex. [4Fe-4S] cluster serves as cofactor.

Its subcellular location is the cell inner membrane. It catalyses the reaction a quinone + NADH + 5 H(+)(in) = a quinol + NAD(+) + 4 H(+)(out). NDH-1 shuttles electrons from NADH, via FMN and iron-sulfur (Fe-S) centers, to quinones in the respiratory chain. The immediate electron acceptor for the enzyme in this species is believed to be ubiquinone. Couples the redox reaction to proton translocation (for every two electrons transferred, four hydrogen ions are translocated across the cytoplasmic membrane), and thus conserves the redox energy in a proton gradient. The sequence is that of NADH-quinone oxidoreductase subunit I from Edwardsiella ictaluri (strain 93-146).